The primary structure comprises 147 residues: Small ribosomal subunit protein uS5 (147 aa).

An S5 DRBM domain is found at 9–72; that stretch reads FQEVVVNIGR…DDAFKNLIHV (64 aa).

Belongs to the universal ribosomal protein uS5 family. In terms of assembly, part of the 30S ribosomal subunit. Contacts proteins S4 and S8.

With S4 and S12 plays an important role in translational accuracy. In terms of biological role, located at the back of the 30S subunit body where it stabilizes the conformation of the head with respect to the body. This is Small ribosomal subunit protein uS5 from Helicobacter pylori (strain J99 / ATCC 700824) (Campylobacter pylori J99).